A 240-amino-acid chain; its full sequence is Adenosylcobinamide-GDP ribazoletransferase (240 aa).

5 consecutive transmembrane segments (helical) span residues 31–51, 57–77, 109–129, 133–153, and 185–205; these read LLYY…ASHL, APLH…ALHL, IAVV…WVLV, VGAQ…GLFL, and LFCL…FAWL.

This sequence belongs to the CobS family. Mg(2+) is required as a cofactor.

The protein resides in the cell inner membrane. It catalyses the reaction alpha-ribazole + adenosylcob(III)inamide-GDP = adenosylcob(III)alamin + GMP + H(+). The catalysed reaction is alpha-ribazole 5'-phosphate + adenosylcob(III)inamide-GDP = adenosylcob(III)alamin 5'-phosphate + GMP + H(+). It functions in the pathway cofactor biosynthesis; adenosylcobalamin biosynthesis; adenosylcobalamin from cob(II)yrinate a,c-diamide: step 7/7. Its function is as follows. Joins adenosylcobinamide-GDP and alpha-ribazole to generate adenosylcobalamin (Ado-cobalamin). Also synthesizes adenosylcobalamin 5'-phosphate from adenosylcobinamide-GDP and alpha-ribazole 5'-phosphate. The protein is Adenosylcobinamide-GDP ribazoletransferase of Pseudomonas putida (strain GB-1).